Reading from the N-terminus, the 526-residue chain is Histidine ammonia-lyase (526 aa).

The segment at residues 143 to 145 (ASG) is a cross-link (5-imidazolinone (Ala-Gly)). S144 is modified (2,3-didehydroalanine (Ser)).

It belongs to the PAL/histidase family. Contains an active site 4-methylidene-imidazol-5-one (MIO), which is formed autocatalytically by cyclization and dehydration of residues Ala-Ser-Gly.

Its subcellular location is the cytoplasm. The enzyme catalyses L-histidine = trans-urocanate + NH4(+). It functions in the pathway amino-acid degradation; L-histidine degradation into L-glutamate; N-formimidoyl-L-glutamate from L-histidine: step 1/3. The polypeptide is Histidine ammonia-lyase (Aromatoleum aromaticum (strain DSM 19018 / LMG 30748 / EbN1) (Azoarcus sp. (strain EbN1))).